The following is a 152-amino-acid chain: Putative pre-16S rRNA nuclease (152 aa).

This sequence belongs to the YqgF nuclease family.

It localises to the cytoplasm. In terms of biological role, could be a nuclease involved in processing of the 5'-end of pre-16S rRNA. This chain is Putative pre-16S rRNA nuclease, found in Bifidobacterium longum (strain DJO10A).